The chain runs to 429 residues: Histidine--tRNA ligase (429 aa).

It belongs to the class-II aminoacyl-tRNA synthetase family. Homodimer.

It is found in the cytoplasm. It carries out the reaction tRNA(His) + L-histidine + ATP = L-histidyl-tRNA(His) + AMP + diphosphate + H(+). The chain is Histidine--tRNA ligase from Pelodictyon phaeoclathratiforme (strain DSM 5477 / BU-1).